The sequence spans 472 residues: Adenosylhomocysteinase (472 aa).

Positions 64, 138, and 198 each coordinate substrate. 199-201 (TTT) lines the NAD(+) pocket. Positions 228 and 232 each coordinate substrate. Residues Asn-233, 262-267 (GFGDVG), Glu-285, Asn-320, 341-343 (IGH), and Asn-386 each bind NAD(+).

This sequence belongs to the adenosylhomocysteinase family. It depends on NAD(+) as a cofactor.

Its subcellular location is the cytoplasm. The enzyme catalyses S-adenosyl-L-homocysteine + H2O = L-homocysteine + adenosine. It participates in amino-acid biosynthesis; L-homocysteine biosynthesis; L-homocysteine from S-adenosyl-L-homocysteine: step 1/1. Its function is as follows. May play a key role in the regulation of the intracellular concentration of adenosylhomocysteine. This Prochlorococcus marinus (strain MIT 9312) protein is Adenosylhomocysteinase.